The sequence spans 102 residues: Small ribosomal subunit protein uS10 (102 aa).

The protein belongs to the universal ribosomal protein uS10 family. In terms of assembly, part of the 30S ribosomal subunit.

In terms of biological role, involved in the binding of tRNA to the ribosomes. In Coprothermobacter proteolyticus (strain ATCC 35245 / DSM 5265 / OCM 4 / BT), this protein is Small ribosomal subunit protein uS10.